A 308-amino-acid polypeptide reads, in one-letter code: Glycine-rich protein GRP33 (308 aa).

Residues 83 to 118 (DQFPKYNFLGKLLGPGGSTMKQLQDETMTKISILGR) form the KH domain. 2 stretches are compositionally biased toward gly residues: residues 203-220 (GPMGPQGRGRGRGRGGFS) and 273-294 (RGAGAGARGARGGLDQSRGGGK). 2 disordered regions span residues 203–222 (GPMGPQGRGRGRGRGGFSGP) and 270–308 (SPGRGAGAGARGARGGLDQSRGGGKFPSARGGRGRAAPY).

In terms of processing, the arginines in the Gly-rich domain might be methylated.

This is Glycine-rich protein GRP33 from Artemia salina (Brine shrimp).